The chain runs to 133 residues: Large ribosomal subunit protein uL14m (133 aa).

The protein belongs to the universal ribosomal protein uL14 family. As to quaternary structure, probably part of the large ribosomal subunit.

It localises to the hydrogenosome. This is Large ribosomal subunit protein uL14m (rpl14) from Nyctotherus ovalis.